Reading from the N-terminus, the 164-residue chain is Large ribosomal subunit protein bL21 (164 aa).

The interval 105 to 164 is disordered; sequence KAPTIGPRAKKEKKVEAAPADGEAPAKKAPAKKAAAKKAAPKAAAKKAPAKKAAPKAKSE. The span at 133–164 shows a compositional bias: basic residues; that stretch reads APAKKAAAKKAAPKAAAKKAPAKKAAPKAKSE.

Belongs to the bacterial ribosomal protein bL21 family. In terms of assembly, part of the 50S ribosomal subunit. Contacts protein L20.

Its function is as follows. This protein binds to 23S rRNA in the presence of protein L20. In Afipia carboxidovorans (strain ATCC 49405 / DSM 1227 / KCTC 32145 / OM5) (Oligotropha carboxidovorans), this protein is Large ribosomal subunit protein bL21.